A 182-amino-acid chain; its full sequence is Protein transport protein gos1 (182 aa).

At 1-163 the chain is on the cytoplasmic side; that stretch reads MKSMLLRDSV…RKTSIRRRRD (163 aa). Residues 164–181 form a helical; Anchor for type IV membrane protein membrane-spanning segment; it reads SIILALLISVLMLLFLFF. A topological domain (vesicular) is located at residue H182.

Belongs to the GOSR1 family. In terms of assembly, component of a SNARE complex consisting of sed5, gos1, ykt6, and sft1.

It localises to the golgi apparatus membrane. Functionally, nonessential SNARE involved in retrograde transport within the Golgi complex. In Schizosaccharomyces pombe (strain 972 / ATCC 24843) (Fission yeast), this protein is Protein transport protein gos1 (gos1).